Reading from the N-terminus, the 513-residue chain is RNA-binding protein FUS (513 aa).

The span at 1–14 (MASNDYTQQATQSY) shows a compositional bias: polar residues. The disordered stretch occupies residues 1-273 (MASNDYTQQA…SEQDNSDNNT (273 aa)). Low complexity-rich tracts occupy residues 20 to 36 (QPGQGYSQQSNQPYGQQ), 43 to 63 (QSTDTSGYGQSSYSGSYGQTQ), and 84 to 124 (SSQS…SGYG). A compositionally biased stretch (gly residues) spans 125–139 (QPQGGGYGQQSGYGG). Residues 140 to 164 (QQQSYGQQQSYNPPQGYGQQSQYNS) show a composition bias toward low complexity. Gly residues-rich tracts occupy residues 165–176 (SGGGGGGGGGSY) and 185–219 (SGGGGGGYGNQDQSGGYGGGQQDRGGRGRGGGGGY). An asymmetric dimethylarginine; alternate mark is found at R211 and R213. R211 and R213 each carry omega-N-methylarginine; alternate. Asymmetric dimethylarginine is present on residues R229, R231, R235, R238, and R246. The segment covering 231-246 (RGGGRGGRGGMGGSDR) has biased composition (gly residues). S264 is modified (phosphoserine). Residues 272 to 358 (NTIFVQGLGE…NPIKVSFATR (87 aa)) form the RRM domain. Phosphothreonine is present on T273. K321 is covalently cross-linked (Glycyl lysine isopeptide (Lys-Gly) (interchain with G-Cter in SUMO2)). S327 carries the post-translational modification Phosphoserine. Disordered regions lie at residues 362-411 (FNRG…QRAG) and 431-513 (CNQC…ERPY). Asymmetric dimethylarginine occurs at positions 364, 370, 373, 375, and 381. Positions 364-408 (RGGGNGRGGRGRGGPMGRGGYGGGGSGGGGRGGFPSGGGGGGGQQ) are enriched in gly residues. Position 394 is an asymmetric dimethylarginine; alternate (R394). Omega-N-methylarginine; alternate is present on R394. A RanBP2-type zinc finger spans residues 409-440 (RAGDWKCPNPTCENMNFSWRNECNQCKAPKPD). A compositionally biased stretch (gly residues) spans 441–455 (GPGGGPGGSHMGGNY). The span at 456–480 (GDDRRGGRGGYDRGGYRGRGGDRGG) shows a compositional bias: basic and acidic residues. R460, R463, R468, R472, R474, R478, R482, and R485 each carry asymmetric dimethylarginine. The span at 481–495 (FRGGRGGGDRGGFGP) shows a compositional bias: gly residues. R490 bears the Asymmetric dimethylarginine; alternate mark. R490 is modified (omega-N-methylarginine; alternate). Residues 498–513 (MDSRGEHRQDRRERPY) show a composition bias toward basic and acidic residues.

It belongs to the RRM TET family. Self-oligomerizes (via N-terminal region). Oligomerization is essential for chromatin binding. Component of nuclear riboprotein complexes. Interacts with ILF3, TDRD3 and SF1. Interacts through its C-terminus with SFRS13A. Interacts with OTUB1 and SARNP. Interacts with LRSAM1. Interacts with SAFB1 in a DNA-dependent manner; this interaction tethers FUS to chromatin. Interacts with MATR3. Interacts with SNRNP70 and POLR2A; these interactions couple RNA transcription and splicing. Interacts (through its RNA-binding domain) with RALY (through its RNA-binding domain); both are components of the same RNPs. In terms of processing, phosphorylated in its N-terminal serine residues upon induced DNA damage. ATM and DNA-PK are able to phosphorylate FUS N-terminal region.

Its subcellular location is the nucleus. In terms of biological role, DNA/RNA-binding protein that plays a role in various cellular processes such as transcription regulation, RNA splicing, RNA transport, DNA repair and damage response. Binds to ssRNA containing the consensus sequence 5'-AGGUAA-3'. Binds to nascent pre-mRNAs and acts as a molecular mediator between RNA polymerase II and U1 small nuclear ribonucleoprotein thereby coupling transcription and splicing. Also binds its own pre-mRNA and autoregulates its expression; this autoregulation mechanism is mediated by non-sense-mediated decay. Plays a role in DNA repair mechanisms by promoting D-loop formation and homologous recombination during DNA double-strand break repair. In neuronal cells, plays crucial roles in dendritic spine formation and stability, RNA transport, mRNA stability and synaptic homeostasis. This chain is RNA-binding protein FUS (FUS), found in Bos taurus (Bovine).